The chain runs to 386 residues: Methionine import ATP-binding protein MetN 2 (386 aa).

In terms of domain architecture, ABC transporter spans 32-272 (VIFDDVGKVF…PQHDATRALL (241 aa)). 69–76 (GRSGAGKS) provides a ligand contact to ATP.

This sequence belongs to the ABC transporter superfamily. Methionine importer (TC 3.A.1.24) family. As to quaternary structure, the complex is composed of two ATP-binding proteins (MetN), two transmembrane proteins (MetI) and a solute-binding protein (MetQ).

The protein resides in the cell inner membrane. It carries out the reaction L-methionine(out) + ATP + H2O = L-methionine(in) + ADP + phosphate + H(+). It catalyses the reaction D-methionine(out) + ATP + H2O = D-methionine(in) + ADP + phosphate + H(+). In terms of biological role, part of the ABC transporter complex MetNIQ involved in methionine import. Responsible for energy coupling to the transport system. The polypeptide is Methionine import ATP-binding protein MetN 2 (Paraburkholderia xenovorans (strain LB400)).